The chain runs to 20 residues: Juvenile hormone-binding protein (20 aa).

It localises to the secreted. Prevents juvenile hormone from being hydrolyzed by general esterases by combining with it specifically. This chain is Juvenile hormone-binding protein (JHBP), found in Bombyx mori (Silk moth).